The sequence spans 300 residues: MQFHSSSALITPFKKDLSVDEAAYEVLIKRQIFQGMDACVPVGTTGESATLTHKEHMRCIEIAVETCKNTKTPSNSRMKVLAGVGSNATSESLSLAKFAQKIGADAILCVSPYYNRPTQQGLFEHYKTIAQSVEIPVMLYDVPSRTGVSIEVSTALKLFREVPNIKAIKEASGSLKRVTELHYYEKDFKIFSGEDSLNHSIMFSGGCGVISVTGNLMPNLISQMVNCALKLEYQQALEIQNKLFHLHQALFVETNPIPIKMAMHLAGLIENPSYRLPLVVPSKETIKLLEKTLQQYEVIV.

Position 45 (threonine 45) interacts with pyruvate. Tyrosine 140 acts as the Proton donor/acceptor in catalysis. The Schiff-base intermediate with substrate role is filled by lysine 169. Isoleucine 210 is a pyruvate binding site.

It belongs to the DapA family. Homotetramer; dimer of dimers.

The protein localises to the cytoplasm. It carries out the reaction L-aspartate 4-semialdehyde + pyruvate = (2S,4S)-4-hydroxy-2,3,4,5-tetrahydrodipicolinate + H2O + H(+). It functions in the pathway amino-acid biosynthesis; L-lysine biosynthesis via DAP pathway; (S)-tetrahydrodipicolinate from L-aspartate: step 3/4. Catalyzes the condensation of (S)-aspartate-beta-semialdehyde [(S)-ASA] and pyruvate to 4-hydroxy-tetrahydrodipicolinate (HTPA). This chain is 4-hydroxy-tetrahydrodipicolinate synthase, found in Helicobacter pylori (strain Shi470).